The sequence spans 169 residues: dCTP pyrophosphatase 1 (169 aa).

Residues Met-1 to Ser-26 are disordered. Positions Glu-14–Ser-26 are enriched in polar residues. Residues His-37 and Trp-46–His-50 each bind substrate. Mg(2+) is bound by residues Glu-62 and Glu-65. Trp-72 is a substrate binding site. Phosphoserine is present on Ser-84. Positions 94 and 97 each coordinate Mg(2+). Tyr-101 contacts substrate. The disordered stretch occupies residues Leu-143–Thr-169.

Homotetramer. The cofactor is Mg(2+).

Its subcellular location is the cytoplasm. It localises to the cytosol. The enzyme catalyses dCTP + H2O = dCMP + diphosphate + H(+). In terms of biological role, hydrolyzes deoxynucleoside triphosphates (dNTPs) to the corresponding nucleoside monophosphates. Has a strong preference for dCTP and its analogs including 5-iodo-dCTP and 5-methyl-dCTP for which it may even have a higher efficiency. May protect DNA or RNA against the incorporation of these genotoxic nucleotide analogs through their catabolism. This chain is dCTP pyrophosphatase 1, found in Bos taurus (Bovine).